The sequence spans 273 residues: Type II methyltransferase M2.MboI (273 aa).

This sequence belongs to the N(4)/N(6)-methyltransferase family.

The catalysed reaction is a 2'-deoxyadenosine in DNA + S-adenosyl-L-methionine = an N(6)-methyl-2'-deoxyadenosine in DNA + S-adenosyl-L-homocysteine + H(+). A beta subtype methylase that recognizes the double-stranded sequence 5'-GATC-3', methylates A-2 on both strands, and protects the DNA from cleavage by the MboI endonuclease. This seems to be a weaker methylase than M1.MboI. The protein is Type II methyltransferase M2.MboI (mboIBM) of Moraxella bovis.